A 182-amino-acid polypeptide reads, in one-letter code: Translation initiation factor IF-3 (182 aa).

Belongs to the IF-3 family. Monomer.

Its subcellular location is the cytoplasm. Its function is as follows. IF-3 binds to the 30S ribosomal subunit and shifts the equilibrium between 70S ribosomes and their 50S and 30S subunits in favor of the free subunits, thus enhancing the availability of 30S subunits on which protein synthesis initiation begins. The protein is Translation initiation factor IF-3 of Endomicrobium trichonymphae.